A 249-amino-acid chain; its full sequence is Putative type I specificity subunit S.MpnORF615P (249 aa).

It belongs to the type-I restriction system S methylase family. In terms of assembly, the methyltransferase is composed of M and S polypeptides.

The specificity (S) subunit of a type I methyltransferase (MTase); this subunit dictates DNA sequence specificity. The single R subunit has multiple frameshifts and is probably not expressed. In Mycoplasma pneumoniae (strain ATCC 29342 / M129 / Subtype 1) (Mycoplasmoides pneumoniae), this protein is Putative type I specificity subunit S.MpnORF615P.